The chain runs to 543 residues: CBS domain-containing protein CBSCBSPB1 (543 aa).

Positions 1–35 are disordered; sequence MASQGGPRRSLSVTTASLHGKKKSMDMAERGLDTG. Ser-17 bears the Phosphoserine mark. The span at 23-35 shows a compositional bias: basic and acidic residues; it reads KSMDMAERGLDTG. CBS domains are found at residues 59–118, 125–183, 225–285, and 293–350; these read RLSK…NVEE, MTKN…RAAE, IIPD…LPPS, and MTQN…AGTT. Residues 372–393 form a disordered region; that stretch reads LSPNEDDEDSRSESSMKVASEA. Residues 402–489 form the PB1 domain; sequence ANTFSFKIED…KSLRLHLDDS (88 aa). A helical membrane pass occupies residues 518-538; the sequence is AYSGVAAGAALVAGLGFMAFL.

It is found in the membrane. The protein is CBS domain-containing protein CBSCBSPB1 (CBSCBSPB1) of Arabidopsis thaliana (Mouse-ear cress).